A 138-amino-acid polypeptide reads, in one-letter code: Class I hydrophobin 1 (138 aa).

The signal sequence occupies residues 1–19 (MRFSAATVSALAMALTVAA). Disulfide bonds link Cys-45-Cys-113, Cys-53-Cys-107, Cys-54-Cys-91, and Cys-114-Cys-131.

This sequence belongs to the fungal hydrophobin family. As to quaternary structure, interacts with the lipid droplet coating protein Cap20.

Its subcellular location is the secreted. The protein resides in the lipid droplet. Aerial growth, conidiation, and dispersal of filamentous fungi in the environment rely upon a capability of their secreting small amphipathic proteins called hydrophobins (HPBs) with low sequence identity. Class I can self-assemble into an outermost layer of rodlet bundles on aerial cell surfaces, conferring cellular hydrophobicity that supports fungal growth, development and dispersal; whereas Class II form highly ordered films at water-air interfaces through intermolecular interactions but contribute nothing to the rodlet structure. Hydr1 is a class I hydrophobin involved in spore germination, appressorium formation, but not in the formation of the rodlet layer of conidia. Responsible for the full virulence on rubber tree leaves. The sequence is that of Class I hydrophobin 1 from Colletotrichum siamense (Anthracnose fungus).